The sequence spans 38 residues: Photosystem II reaction center protein L (38 aa).

A helical membrane pass occupies residues 17-37; it reads SLYWGLLCIFVLAILFSSYFF.

It belongs to the PsbL family. As to quaternary structure, PSII is composed of 1 copy each of membrane proteins PsbA, PsbB, PsbC, PsbD, PsbE, PsbF, PsbH, PsbI, PsbJ, PsbK, PsbL, PsbM, PsbT, PsbX, PsbY, PsbZ, Psb30/Ycf12, at least 3 peripheral proteins of the oxygen-evolving complex and a large number of cofactors. It forms dimeric complexes.

Its subcellular location is the plastid. It is found in the chloroplast thylakoid membrane. In terms of biological role, one of the components of the core complex of photosystem II (PSII). PSII is a light-driven water:plastoquinone oxidoreductase that uses light energy to abstract electrons from H(2)O, generating O(2) and a proton gradient subsequently used for ATP formation. It consists of a core antenna complex that captures photons, and an electron transfer chain that converts photonic excitation into a charge separation. This subunit is found at the monomer-monomer interface and is required for correct PSII assembly and/or dimerization. The sequence is that of Photosystem II reaction center protein L from Cyanidioschyzon merolae (strain NIES-3377 / 10D) (Unicellular red alga).